The primary structure comprises 276 residues: MLLCVLKIYIIFCLVNDGAGKRSEVRGRTKTYSHNSRGYFRKERGMGKNKILLVNTKGFDQPHIGQGSFGLVAELFDSTRTDTSRKEPDINKVKLFSTAAHANKSSRNIGIFRRKAFNGSRRNIFSRQPFNKRNTDVTEKPGAKMFWNNFLVKMNGAPQNTSHGGKPQEIMKEACKTLPFTQNIVHENCDRMVIQNNLCFGKCISLHVPNQQDRRNTCAHCLPSKFTLNHLALNCTGSNNVVKVVMMVEECACEAHKNNYHQTAQFNMDASTTLHN.

A signal peptide spans Met-1–Gly-20. 3 N-linked (GlcNAc...) asparagine glycosylation sites follow: Asn-103, Asn-118, and Asn-160. 4 cysteine pairs are disulfide-bonded: Cys-175/Cys-221, Cys-189/Cys-235, Cys-199/Cys-251, and Cys-203/Cys-253. The 85-residue stretch at Cys-175 to Asn-259 folds into the CTCK domain. Residue Asn-234 is glycosylated (N-linked (GlcNAc...) asparagine).

It belongs to the DAN family. In terms of assembly, the long chain interacts with nodal/nr-1, bmp4 and wnt8, thereby inhibiting their function. The short chain interacts with nodal/nr-1 but not bmp4 or wnt8. Expressed in the anterior endomesoderm of the early gastrula with expression expanded laterally around the margin at the endoderm/mesoderm boundary.

It localises to the secreted. Inhibits wnt, nodal/nr-1 and bmp signaling in the embryo to promote head formation and anterior neural induction. Within the endoderm, acts as an essential mediator of nodal/nr-1-induced cardiogenesis in the overlying mesoderm. The protein is Cerberus of Xenopus tropicalis (Western clawed frog).